Here is a 142-residue protein sequence, read N- to C-terminus: MLLHIIARGRIGRGPEAELVERYMKRVTWAQKISELPDTGGRVPAAAAGSRTILLDEGGEQMSSLEFANLLENWRDGGVREARFCIGAADGFTPDERKGADKVIAFGRATWPHLMARAMLAEQLWRATSIIAGHPYHREGRQ.

2 residues coordinate S-adenosyl-L-methionine: L55 and G87.

Belongs to the RNA methyltransferase RlmH family. Homodimer.

It is found in the cytoplasm. It carries out the reaction pseudouridine(1915) in 23S rRNA + S-adenosyl-L-methionine = N(3)-methylpseudouridine(1915) in 23S rRNA + S-adenosyl-L-homocysteine + H(+). Its function is as follows. Specifically methylates the pseudouridine at position 1915 (m3Psi1915) in 23S rRNA. The chain is Ribosomal RNA large subunit methyltransferase H from Sphingopyxis alaskensis (strain DSM 13593 / LMG 18877 / RB2256) (Sphingomonas alaskensis).